Here is a 331-residue protein sequence, read N- to C-terminus: Ferredoxin--NADP reductase 2 (331 aa).

The FAD site is built by glutamate 37, glutamine 45, tyrosine 50, valine 90, phenylalanine 124, aspartate 285, and threonine 326.

It belongs to the ferredoxin--NADP reductase type 2 family. As to quaternary structure, homodimer. FAD is required as a cofactor.

The catalysed reaction is 2 reduced [2Fe-2S]-[ferredoxin] + NADP(+) + H(+) = 2 oxidized [2Fe-2S]-[ferredoxin] + NADPH. This Bacillus velezensis (strain DSM 23117 / BGSC 10A6 / LMG 26770 / FZB42) (Bacillus amyloliquefaciens subsp. plantarum) protein is Ferredoxin--NADP reductase 2.